The primary structure comprises 155 residues: Ribosomal RNA large subunit methyltransferase H (155 aa).

Residues Leu72, Gly103, and 122–127 each bind S-adenosyl-L-methionine; that span reads LSDLTL.

The protein belongs to the RNA methyltransferase RlmH family. Homodimer.

The protein resides in the cytoplasm. It catalyses the reaction pseudouridine(1915) in 23S rRNA + S-adenosyl-L-methionine = N(3)-methylpseudouridine(1915) in 23S rRNA + S-adenosyl-L-homocysteine + H(+). Specifically methylates the pseudouridine at position 1915 (m3Psi1915) in 23S rRNA. The sequence is that of Ribosomal RNA large subunit methyltransferase H from Acidovorax ebreus (strain TPSY) (Diaphorobacter sp. (strain TPSY)).